We begin with the raw amino-acid sequence, 182 residues long: MTKLSAFNFQKWIDEHKHLLKPPVGNQLVFKDADLMVTVVGGPNKRTDYHDDPVEEFFYQLKGDMLLKLHDTSTGEFYDVPIREGDIFLLPAHIRHSPQRPQEGSIGLVIEPARPEGVLDAVEWYCFECSGLVHRAEVDLESIVDDLPPLYAAFYNDEKLRTCPHCNTVHPGKNPPEGWVAL.

Arg46 lines the O2 pocket. Fe cation is bound by residues His50, Glu56, and His96. Position 56 (Glu56) interacts with substrate. Substrate is bound by residues Arg100 and Glu111. Residues Cys126, Cys129, Cys163, and Cys166 each coordinate Fe cation.

This sequence belongs to the 3-HAO family. As to quaternary structure, homodimer. Fe(2+) is required as a cofactor.

The enzyme catalyses 3-hydroxyanthranilate + O2 = (2Z,4Z)-2-amino-3-carboxymuconate 6-semialdehyde. It participates in cofactor biosynthesis; NAD(+) biosynthesis; quinolinate from L-kynurenine: step 3/3. Functionally, catalyzes the oxidative ring opening of 3-hydroxyanthranilate to 2-amino-3-carboxymuconate semialdehyde, which spontaneously cyclizes to quinolinate. This chain is 3-hydroxyanthranilate 3,4-dioxygenase, found in Brucella anthropi (strain ATCC 49188 / DSM 6882 / CCUG 24695 / JCM 21032 / LMG 3331 / NBRC 15819 / NCTC 12168 / Alc 37) (Ochrobactrum anthropi).